A 329-amino-acid polypeptide reads, in one-letter code: Flotillin-like protein FloA (329 aa).

The next 2 helical transmembrane spans lie at 6 to 26 and 27 to 47; these read FIVI…FVPI and GLWI…LVGM.

This sequence belongs to the flotillin-like FloA family. In terms of assembly, homooligomerizes.

It is found in the cell membrane. Its subcellular location is the membrane raft. Found in functional membrane microdomains (FMM) that may be equivalent to eukaryotic membrane rafts. FMMs are highly dynamic and increase in number as cells age. Flotillins are thought to be important factors in membrane fluidity. The protein is Flotillin-like protein FloA of Staphylococcus aureus (strain USA300).